Consider the following 469-residue polypeptide: IAA-alanine resistance protein 1 (469 aa).

The N-terminal stretch at 1 to 28 (MSFSLRKLLVPILVLVLFLDLCVESGFS) is a signal peptide. Residues 33-58 (ARDDHVHHHGGGCSHSHDHDHDHDHD) form a disordered region. The segment covering 47–58 (HSHDHDHDHDHD) has biased composition (basic and acidic residues). Helical transmembrane passes span 114 to 134 (CSLLVSLASLICLVLLPIMFV) and 141 to 161 (WFVDSLALFGAGAMLGDAFLH). The disordered stretch occupies residues 170–197 (GHSHSNDHHENHDHHDHSHSDSPSHSHS). Basic and acidic residues predominate over residues 173–193 (HSNDHHENHDHHDHSHSDSPS). A helical membrane pass occupies residues 201 to 221 (LSVGLSVLAGIVVFLLVEKLV). A disordered region spans residues 228–315 (SSGSNTWGHH…GKSDKPEQVE (88 aa)). A compositionally biased stretch (basic residues) spans 235–246 (GHHHHHHHAGSK). The span at 247–256 (KLKDEGDHNN) shows a compositional bias: basic and acidic residues. Over residues 257-279 (LDQQSSSDAIVNSSEKVSGGSTD) the composition is skewed to polar residues. Over residues 292-315 (ATDKSDSGTEITSDGKSDKPEQVE) the composition is skewed to basic and acidic residues. Transmembrane regions (helical) follow at residues 387–407 (LFFNFLSALVALAGTALVLVW), 415–435 (SLIEGFTAGGFIYIAVAGVLA), and 448–468 (SACHLISLILGMSVALCISLI).

It belongs to the ZIP transporter (TC 2.A.5) family. KE4/Catsup subfamily.

It localises to the membrane. Functionally, may participate in auxin metabolism or response. Probable transporter. The sequence is that of IAA-alanine resistance protein 1 (IAR1) from Arabidopsis thaliana (Mouse-ear cress).